The following is a 398-amino-acid chain: Cell adhesion molecule 3 (398 aa).

The N-terminal stretch at 1–24 (MGAPAASLLLLLLLFACCWAPGGA) is a signal peptide. The Ig-like V-type domain maps to 25–126 (NLSQDDSQPW…VRTAKSLVTV (102 aa)). At 25–330 (NLSQDDSQPW…PVPSSSSTYH (306 aa)) the chain is on the extracellular side. Intrachain disulfides connect C50/C110, C152/C209, and C254/C299. Ig-like C2-type domains lie at 130–228 (PQKP…QRIE) and 233–315 (PTAM…YTLN). N290 is a glycosylation site (N-linked (GlcNAc...) asparagine). A helical transmembrane segment spans residues 331–351 (AIIGGIVAFIVFLLLIMLIFL). Residues 352–398 (GHYLIRHKGTYLTHEAKGSDDAPDADTAIINAEGGQSGGDDKKEYFI) lie on the Cytoplasmic side of the membrane. Residues 367-398 (AKGSDDAPDADTAIINAEGGQSGGDDKKEYFI) form a disordered region. At S388 the chain carries Phosphoserine.

The protein belongs to the nectin family. As to quaternary structure, homodimer. Can form trans-heterodimers with NECTIN3. Interacts with EPB41L1, DLG3, PALS2 and CASK. In terms of tissue distribution, isoform 1 is expressed mainly in adult and fetal brain. Isoform 2 is highly expressed in adult brain and weakly expressed in placenta. In brain, Isoform 2 is highly expressed in cerebellum.

Its subcellular location is the cell membrane. It is found in the cell junction. Functionally, involved in cell-cell adhesion. Has both calcium-independent homophilic cell-cell adhesion activity and calcium-independent heterophilic cell-cell adhesion activity with IGSF4, NECTIN1 and NECTIN3. Interaction with EPB41L1 may regulate structure or function of cell-cell junctions. The polypeptide is Cell adhesion molecule 3 (CADM3) (Homo sapiens (Human)).